The chain runs to 406 residues: Putative gustatory receptor 59f (406 aa).

Residues 1 to 36 (MRSSATKGAKLKNSPRERLSSFNPQYAERYKELYRT) are Cytoplasmic-facing. Residues 37 to 57 (LFWLLLISVLANTAPITILPG) traverse the membrane as a helical segment. Topologically, residues 58–69 (CPNRFYRLVHLS) are extracellular. Residues 70–90 (WMILWYGLFVLGSYWEFVLVT) form a helical membrane-spanning segment. The Cytoplasmic portion of the chain corresponds to 91–99 (TQRVSLDRY). A helical transmembrane segment spans residues 100–120 (LNAIESAIYVVHIFSIMLLTW). At 121–154 (QCRNWAPKLMTNIVTSDLNRAYTIDCNRTKRFIR) the chain is on the extracellular side. A glycan (N-linked (GlcNAc...) asparagine) is linked at Asn147. A helical transmembrane segment spans residues 155–175 (LQLFLVGIFACLAIFFNIWTH). The Cytoplasmic portion of the chain corresponds to 176-189 (KFVVYRSILSINSY). The chain crosses the membrane as a helical span at residues 190 to 210 (VMPNIISSISFAQYYLLLQGI). At 211 to 259 (AWRQRRLTEGLERELTHLHSPRISEVQKIRMHHANLIDFTKAVNRTFQY) the chain is on the extracellular side. The N-linked (GlcNAc...) asparagine glycan is linked to Asn254. A helical membrane pass occupies residues 260 to 280 (SILLLFVGCFLNFNLVLFLVY). The Cytoplasmic segment spans residues 281–364 (QGIENPSMAD…RQHVVCGVIN (84 aa)). Residues 365 to 385 (LDLKFLTTLLVASADFFIFLL) traverse the membrane as a helical segment. The Extracellular segment spans residues 386 to 406 (QYDVTYEALSKSVQGNVTRYK). A glycan (N-linked (GlcNAc...) asparagine) is linked at Asn401.

This sequence belongs to the insect chemoreceptor superfamily. Gustatory receptor (GR) family. Gr10a subfamily. In terms of tissue distribution, expressed in the adult abdomen and wing. In larvae, is expressed in neurons of the terminal external chemosensory organ.

It is found in the cell membrane. In terms of biological role, probable gustatory receptor which mediates acceptance or avoidance behavior, depending on its substrates. This Drosophila melanogaster (Fruit fly) protein is Putative gustatory receptor 59f (Gr59f).